Reading from the N-terminus, the 1957-residue chain is [F-actin]-monooxygenase MICAL2 (1957 aa).

A monooxygenase domain region spans residues 2–494 (GENEDEKQAQ…KHLYITKELE (493 aa)). Residues Cys97, 116–118 (EKR), 123–125 (RNN), Phe183, Tyr298, and Asp398 each bind FAD. Positions 516–619 (DIRPSKLLTW…MVMYLSKFYE (104 aa)) constitute a Calponin-homology (CH) domain. Residue Ser631 is modified to Phosphoserine. The short motif at 660–681 (RKRTPRVDGQTGENDMNKRRRK) is the Nuclear localization signal element. 2 disordered regions span residues 660-714 (RKRT…NQNK) and 886-942 (QNKL…HPSH). Polar residues predominate over residues 687–714 (DEPSNFSSRSLGSNQECGSSKEGGNQNK). Over residues 899 to 910 (PPSPPSRLPSPD) the composition is skewed to pro residues. Over residues 911 to 925 (PAASSSPSTVDSASP) the composition is skewed to low complexity. Positions 1000-1062 (DTCYFCKKRV…KPHFIHCKTN (63 aa)) constitute an LIM zinc-binding domain. Residues Cys1002, Cys1005, His1023, Cys1026, Cys1029, Cys1032, Cys1052, and His1055 each contribute to the Zn(2+) site. Disordered stretches follow at residues 1070–1143 (AELK…PSEW), 1168–1243 (SEDS…TPSK), 1258–1345 (VNKR…LYLP), 1361–1431 (GEDG…EGGP), 1467–1626 (KAGE…SPPC), and 1675–1779 (ESRQ…KEKK). Residues 1185 to 1195 (SHTEPCEEKPW) are compositionally biased toward basic and acidic residues. The span at 1232–1243 (RANSFQSPTPSK) shows a compositional bias: polar residues. Positions 1275 to 1294 (LPSSSSHSSSPPSSSSTSVS) are enriched in low complexity. Over residues 1302–1316 (SPPQMTASEPLSQVS) the composition is skewed to polar residues. The tract at residues 1324 to 1363 (TPNFRRRAVAQGAPREIPLYLPHHPKPEWAEYCLVSPGED) is interaction with MAPK1. 2 stretches are compositionally biased toward basic and acidic residues: residues 1388-1402 (SNHR…KDRS) and 1413-1431 (GEDR…EGGP). Over residues 1485–1496 (VLKPVRPLLLPR) the composition is skewed to low complexity. Residues 1552–1562 (GGKKAWAKQES) show a composition bias toward basic and acidic residues. Positions 1570 to 1579 (CTRSFSLRKT) are enriched in polar residues. Ser1688 carries the phosphoserine modification. Residues 1718-1733 (APPPPPPPPPPPPPPT) are compositionally biased toward pro residues. Low complexity predominate over residues 1751 to 1762 (ASSSASSTSSSS). The region spanning 1796-1945 (KQEELKRLYK…EKAEDQHFES (150 aa)) is the bMERB domain.

It belongs to the Mical family. As to quaternary structure, interacts with PLXNA4. Interacts with RAB1B. Interacts with MAPK1/ERK2. Interacts with RAB35, RAB8A, RAB10, RAB13 and RAB15 (in their GTP-bound forms); binding to RAB35 is of low affinity compared to other Rab proteins; at least in case of RAB8A may bind 2 molecules of RAB8A simultaneously through a high and a low affinity binding site, respectively. May interact with MAPK1/ERK2. Interacts with CORO1C; this interaction recruits MICAL2 to the actin filaments. The cofactor is FAD.

The protein resides in the nucleus. The protein localises to the cytoplasm. It catalyses the reaction L-methionyl-[F-actin] + NADPH + O2 + H(+) = L-methionyl-(R)-S-oxide-[F-actin] + NADP(+) + H2O. Specifically inhibited by CCG-1423, a small molecule inhibitor of SRF:MKL1/MRTF-A-dependent transcription. Its function is as follows. Methionine monooxygenase that promotes depolymerization of F-actin by mediating oxidation of residues 'Met-44' and 'Met-47' on actin to form methionine-sulfoxide, resulting in actin filament disassembly and preventing repolymerization. Regulates the disassembly of branched actin networks also by oxidizing ARP3B-containing ARP2/3 complexes leading to ARP3B dissociation from the network. Acts as a key regulator of the SRF signaling pathway elicited by nerve growth factor and serum: mediates oxidation and subsequent depolymerization of nuclear actin, leading to increase MKL1/MRTF-A presence in the nucleus and promote SRF:MKL1/MRTF-A-dependent gene transcription. Does not activate SRF:MKL1/MRTF-A through RhoA. This Homo sapiens (Human) protein is [F-actin]-monooxygenase MICAL2.